The primary structure comprises 420 residues: UDP-N-acetylglucosamine 1-carboxyvinyltransferase (420 aa).

Phosphoenolpyruvate is bound at residue 22-23; sequence KN. Arg-91 provides a ligand contact to UDP-N-acetyl-alpha-D-glucosamine. Residue Cys-115 is the Proton donor of the active site. Cys-115 carries the 2-(S-cysteinyl)pyruvic acid O-phosphothioketal modification. UDP-N-acetyl-alpha-D-glucosamine contacts are provided by residues 120–124, 160–163, Asp-305, and Ile-327; these read RPVDL and KVSV.

It belongs to the EPSP synthase family. MurA subfamily.

It is found in the cytoplasm. It carries out the reaction phosphoenolpyruvate + UDP-N-acetyl-alpha-D-glucosamine = UDP-N-acetyl-3-O-(1-carboxyvinyl)-alpha-D-glucosamine + phosphate. The protein operates within cell wall biogenesis; peptidoglycan biosynthesis. Cell wall formation. Adds enolpyruvyl to UDP-N-acetylglucosamine. The sequence is that of UDP-N-acetylglucosamine 1-carboxyvinyltransferase from Proteus mirabilis (strain HI4320).